The following is a 120-amino-acid chain: Small ribosomal subunit protein uS13 (120 aa).

The interval H92–K120 is disordered. Over residues A107–K120 the composition is skewed to basic residues.

It belongs to the universal ribosomal protein uS13 family. As to quaternary structure, part of the 30S ribosomal subunit. Forms a loose heterodimer with protein S19. Forms two bridges to the 50S subunit in the 70S ribosome.

Located at the top of the head of the 30S subunit, it contacts several helices of the 16S rRNA. In the 70S ribosome it contacts the 23S rRNA (bridge B1a) and protein L5 of the 50S subunit (bridge B1b), connecting the 2 subunits; these bridges are implicated in subunit movement. Contacts the tRNAs in the A and P-sites. This is Small ribosomal subunit protein uS13 from Helicobacter pylori (strain J99 / ATCC 700824) (Campylobacter pylori J99).